A 100-amino-acid polypeptide reads, in one-letter code: NADH-quinone oxidoreductase subunit K (100 aa).

The next 3 membrane-spanning stretches (helical) occupy residues 4-24 (FEYY…GVII), 28-48 (IIAM…AFVA), and 61-81 (FVFF…GLII).

It belongs to the complex I subunit 4L family. NDH-1 is composed of 14 different subunits. Subunits NuoA, H, J, K, L, M, N constitute the membrane sector of the complex.

The protein resides in the cell inner membrane. It carries out the reaction a quinone + NADH + 5 H(+)(in) = a quinol + NAD(+) + 4 H(+)(out). Functionally, NDH-1 shuttles electrons from NADH, via FMN and iron-sulfur (Fe-S) centers, to quinones in the respiratory chain. The immediate electron acceptor for the enzyme in this species is believed to be ubiquinone. Couples the redox reaction to proton translocation (for every two electrons transferred, four hydrogen ions are translocated across the cytoplasmic membrane), and thus conserves the redox energy in a proton gradient. This Sulfurihydrogenibium sp. (strain YO3AOP1) protein is NADH-quinone oxidoreductase subunit K.